An 825-amino-acid chain; its full sequence is IQ and AAA domain-containing protein 1-like (825 aa).

In terms of domain architecture, IQ spans 206-235 (RDQGAIVIQKVWKGYLQRKRIEQDRRVEME). Positions 344-366 (QAQESRKKDQEKKEKNKEKEKEK) are enriched in basic and acidic residues. Disordered stretches follow at residues 344-378 (QAQESRKKDQEKKEKNKEKEKEKKEKKKKKVKEEK) and 459-487 (DREETRPLKSPKKKGGKKSGKKKKEKDLT). A compositionally biased stretch (basic residues) spans 467–482 (KSPKKKGGKKSGKKKK). 572 to 579 (GPSGMGKK) serves as a coordination point for ATP.

Belongs to the AAA ATPase family.

In Mus musculus (Mouse), this protein is IQ and AAA domain-containing protein 1-like (Iqca1l).